A 137-amino-acid chain; its full sequence is Nucleoside diphosphate kinase (137 aa).

6 residues coordinate ATP: Lys-11, Phe-59, Arg-87, Thr-93, Arg-104, and Asn-114. Catalysis depends on His-117, which acts as the Pros-phosphohistidine intermediate.

It belongs to the NDK family. As to quaternary structure, homotetramer. The cofactor is Mg(2+).

The protein localises to the cytoplasm. The enzyme catalyses a 2'-deoxyribonucleoside 5'-diphosphate + ATP = a 2'-deoxyribonucleoside 5'-triphosphate + ADP. The catalysed reaction is a ribonucleoside 5'-diphosphate + ATP = a ribonucleoside 5'-triphosphate + ADP. Functionally, major role in the synthesis of nucleoside triphosphates other than ATP. The ATP gamma phosphate is transferred to the NDP beta phosphate via a ping-pong mechanism, using a phosphorylated active-site intermediate. The protein is Nucleoside diphosphate kinase of Frankia casuarinae (strain DSM 45818 / CECT 9043 / HFP020203 / CcI3).